Reading from the N-terminus, the 699-residue chain is tRNA 5-methylaminomethyl-2-thiouridine biosynthesis bifunctional protein MnmC (699 aa).

Residues 1-247 (MPAVSRPLPP…KREMLCGEIA (247 aa)) are tRNA (mnm(5)s(2)U34)-methyltransferase. The FAD-dependent cmnm(5)s(2)U34 oxidoreductase stretch occupies residues 275 to 699 (IGAGLAGTSV…QPSPTTTETP (425 aa)). The disordered stretch occupies residues 675–699 (RGNATLSTSSPNDDAQPSPTTTETP).

It in the N-terminal section; belongs to the methyltransferase superfamily. tRNA (mnm(5)s(2)U34)-methyltransferase family. In the C-terminal section; belongs to the DAO family. FAD serves as cofactor.

The protein resides in the cytoplasm. The enzyme catalyses 5-aminomethyl-2-thiouridine(34) in tRNA + S-adenosyl-L-methionine = 5-methylaminomethyl-2-thiouridine(34) in tRNA + S-adenosyl-L-homocysteine + H(+). In terms of biological role, catalyzes the last two steps in the biosynthesis of 5-methylaminomethyl-2-thiouridine (mnm(5)s(2)U) at the wobble position (U34) in tRNA. Catalyzes the FAD-dependent demodification of cmnm(5)s(2)U34 to nm(5)s(2)U34, followed by the transfer of a methyl group from S-adenosyl-L-methionine to nm(5)s(2)U34, to form mnm(5)s(2)U34. This Chromohalobacter salexigens (strain ATCC BAA-138 / DSM 3043 / CIP 106854 / NCIMB 13768 / 1H11) protein is tRNA 5-methylaminomethyl-2-thiouridine biosynthesis bifunctional protein MnmC.